A 127-amino-acid polypeptide reads, in one-letter code: Glycine cleavage system H protein (127 aa).

Residues 24–106 form the Lipoyl-binding domain; that stretch reads TATLGISAFA…YGEGWLVKVQ (83 aa). An N6-lipoyllysine modification is found at K65.

It belongs to the GcvH family. As to quaternary structure, the glycine cleavage system is composed of four proteins: P, T, L and H. (R)-lipoate is required as a cofactor.

Functionally, the glycine cleavage system catalyzes the degradation of glycine. The H protein shuttles the methylamine group of glycine from the P protein to the T protein. This is Glycine cleavage system H protein from Thermosynechococcus vestitus (strain NIES-2133 / IAM M-273 / BP-1).